Here is a 188-residue protein sequence, read N- to C-terminus: Elongation factor P (188 aa).

K34 carries the N6-(3,6-diaminohexanoyl)-5-hydroxylysine modification.

The protein belongs to the elongation factor P family. May be beta-lysylated on the epsilon-amino group of Lys-34 by the combined action of EpmA and EpmB, and then hydroxylated on the C5 position of the same residue by EpmC (if this protein is present). Lysylation is critical for the stimulatory effect of EF-P on peptide-bond formation. The lysylation moiety may extend toward the peptidyltransferase center and stabilize the terminal 3-CCA end of the tRNA. Hydroxylation of the C5 position on Lys-34 may allow additional potential stabilizing hydrogen-bond interactions with the P-tRNA.

The protein resides in the cytoplasm. It functions in the pathway protein biosynthesis; polypeptide chain elongation. Involved in peptide bond synthesis. Alleviates ribosome stalling that occurs when 3 or more consecutive Pro residues or the sequence PPG is present in a protein, possibly by augmenting the peptidyl transferase activity of the ribosome. Modification of Lys-34 is required for alleviation. This Vibrio parahaemolyticus serotype O3:K6 (strain RIMD 2210633) protein is Elongation factor P.